Reading from the N-terminus, the 492-residue chain is ATP synthase subunit beta, chloroplastic (492 aa).

ATP is bound at residue 170–177 (GGAGVGKT).

The protein belongs to the ATPase alpha/beta chains family. As to quaternary structure, F-type ATPases have 2 components, CF(1) - the catalytic core - and CF(0) - the membrane proton channel. CF(1) has five subunits: alpha(3), beta(3), gamma(1), delta(1), epsilon(1). CF(0) has four main subunits: a(1), b(1), b'(1) and c(9-12).

It localises to the plastid. Its subcellular location is the chloroplast thylakoid membrane. The catalysed reaction is ATP + H2O + 4 H(+)(in) = ADP + phosphate + 5 H(+)(out). Functionally, produces ATP from ADP in the presence of a proton gradient across the membrane. The catalytic sites are hosted primarily by the beta subunits. This is ATP synthase subunit beta, chloroplastic from Anthoceros angustus (Hornwort).